A 1456-amino-acid chain; its full sequence is Ig-like and fibronectin type-III domain-containing protein C27B7.7 (1456 aa).

The first 16 residues, 1-16 (MISLSLVLLLLFGVRC), serve as a signal peptide directing secretion. Fibronectin type-III domains are found at residues 24-128 (NDDS…SINT) and 132-227 (IPKA…TNST). N64, N146, N164, N198, and N225 each carry an N-linked (GlcNAc...) asparagine glycan. In terms of domain architecture, Ig-like 1 spans 236 to 322 (PDEEYTADPQ…DAGDSSKEVN (87 aa)). A disulfide bond links C254 and C308. Positions 328–426 (PGSPPSEITL…VAMERDTQPI (99 aa)) constitute a Fibronectin type-III 3 domain. Residues N471, N497, and N517 are each glycosylated (N-linked (GlcNAc...) asparagine). 3 Fibronectin type-III domains span residues 531-631 (APTQ…TLNG), 636-736 (PPDN…TAYS), and 737-846 (EVPI…WFRT). Residues N658, N691, and N692 are each glycosylated (N-linked (GlcNAc...) asparagine). The 108-residue stretch at 841–948 (PRWFRTGHGK…GSSSASVEIR (108 aa)) folds into the Ig-like 2 domain. A disulfide bridge connects residues C877 and C932. N893, N898, N969, N1091, N1120, N1133, N1151, N1207, N1268, N1277, N1298, N1350, N1357, and N1382 each carry an N-linked (GlcNAc...) asparagine glycan. Positions 955–1050 (PPENIILTAY…SCISDVLYET (96 aa)) constitute a Fibronectin type-III 7 domain. Fibronectin type-III domains lie at 1148–1234 (APTN…TPNG), 1236–1343 (PKTA…ISFD), and 1347–1438 (VIDN…SSPS). Residues 1419 to 1456 (LGRESPPSEEIDLEFISSPSPTPIISGSRRKVIKEPPL) form a disordered region. Over residues 1434–1445 (ISSPSPTPIISG) the composition is skewed to low complexity.

It localises to the secreted. The sequence is that of Ig-like and fibronectin type-III domain-containing protein C27B7.7 from Caenorhabditis elegans.